A 145-amino-acid polypeptide reads, in one-letter code: Flagellar assembly factor FliW (145 aa).

It belongs to the FliW family. In terms of assembly, interacts with translational regulator CsrA and flagellin(s).

The protein resides in the cytoplasm. Its function is as follows. Acts as an anti-CsrA protein, binds CsrA and prevents it from repressing translation of its target genes, one of which is flagellin. Binds to flagellin and participates in the assembly of the flagellum. This Thermosipho africanus (strain TCF52B) protein is Flagellar assembly factor FliW.